A 212-amino-acid polypeptide reads, in one-letter code: Bcl-2-related ovarian killer protein (212 aa).

Residue serine 7 is modified to Phosphoserine. Residues 15–45 form an interactions with ITPR1 region; sequence MDAFDRSPTDKELVAQAKALGREYVHARLLR. Residues lysine 25 and lysine 32 each participate in a glycyl lysine isopeptide (Lys-Gly) (interchain with G-Cter in ubiquitin) cross-link. A BH4 motif is present at residues 32–44; the sequence is KALGREYVHARLL. A BH3 motif is present at residues 66 to 82; sequence VCAVLLRLGDELEMIRP. The nuclear export signal stretch occupies residues 70–78; the sequence is LLRLGDELE. Positions 112–131 match the BH1 motif; that stretch reads HIFSAGITWGKVVSLYAVAA. Glycyl lysine isopeptide (Lys-Gly) (interchain with G-Cter in ubiquitin) cross-links involve residues lysine 159 and lysine 176. The BH2 signature appears at 164–178; that stretch reads WLRRRGGWTDVLKCV. The chain crosses the membrane as a helical span at residues 189–209; that stretch reads WLVAALCSFGRFLKAAFFVLL.

Belongs to the Bcl-2 family. In terms of assembly, monomer; positively regulates apoptotic process. Homodimer. Heterodimer. Oligomer; promoted by apoptotic stimuli and BH3-only proteins; mediates constitutive activation. Interacts (via BH4 domain) with ITPR1; enhances BOK expression and stabilization; limits apoptosis and prevents ubiquitination and then degradation; protects ITPR1 from proteolysis by CASP3 during apoptosis. Interacts with ITPR2 and ITPR3; binds most strongly to ITPR2, and barely to ITPR3; regulates their expression. Interacts with XPO1; translocates to the cytoplasm. Interacts with BNIP3; promotes oligomerization. Post-translationally, ubiquitinated by AMFR/gp78 E3 ubiquitin ligase complex; mediates degradation by ubiquitin-proteasome pathway in a VCP/p97-dependent manner; prevents from pro-apoptotic activity; promotes degradation of newly synthesized proteins that are not ITPR1 associated. As to expression, expressed mainly in oocytes; weak expression in granulosa cells of the developing follicles. In adult human ovaries, expressed in granulosa cells at all follicular stages, but expression in primordial/primary follicles granulosa cell is stronger than in secondary and antral follicles.

The protein resides in the mitochondrion membrane. It localises to the endoplasmic reticulum membrane. It is found in the mitochondrion inner membrane. Its subcellular location is the cytoplasm. The protein localises to the nucleus. The protein resides in the mitochondrion. It localises to the endoplasmic reticulum. It is found in the mitochondrion outer membrane. Its subcellular location is the early endosome membrane. The protein localises to the recycling endosome membrane. The protein resides in the nucleus outer membrane. It localises to the golgi apparatus. It is found in the cis-Golgi network membrane. Its subcellular location is the trans-Golgi network membrane. The protein localises to the membrane. Functionally, apoptosis regulator that functions through different apoptotic signaling pathways. Plays a roles as pro-apoptotic protein that positively regulates intrinsic apoptotic process in a BAX- and BAK1-dependent manner or in a BAX- and BAK1-independent manner. In response to endoplasmic reticulum stress promotes mitochondrial apoptosis through downstream BAX/BAK1 activation and positive regulation of PERK-mediated unfolded protein response. Activates apoptosis independently of heterodimerization with survival-promoting BCL2 and BCL2L1 through induction of mitochondrial outer membrane permeabilization, in a BAX- and BAK1-independent manner, in response to inhibition of ERAD-proteasome degradation system, resulting in cytochrome c release. In response to DNA damage, mediates intrinsic apoptotic process in a TP53-dependent manner. Plays a role in granulosa cell apoptosis by CASP3 activation. Plays a roles as anti-apoptotic protein during neuronal apoptotic process, by negatively regulating poly ADP-ribose polymerase-dependent cell death through regulation of neuronal calcium homeostasis and mitochondrial bioenergetics in response to NMDA excitation. In addition to its role in apoptosis, may regulate trophoblast cell proliferation during the early stages of placental development, by acting on G1/S transition through regulation of CCNE1 expression. May also play a role as an inducer of autophagy by disrupting interaction between MCL1 and BECN1. Pro-apoptotic molecule exerting its function through the mitochondrial pathway. This chain is Bcl-2-related ovarian killer protein, found in Homo sapiens (Human).